Here is a 146-residue protein sequence, read N- to C-terminus: Kappa-casein (146 aa).

Residues threonine 107 and threonine 112 are each glycosylated (O-linked (GalNAc...) threonine). Position 125 is a phosphoserine; alternate (serine 125). Serine 125 carries O-linked (GalNAc...) serine; alternate glycosylation. Threonine 142 carries O-linked (GalNAc...) threonine glycosylation. The residue at position 143 (serine 143) is a Phosphoserine.

This sequence belongs to the kappa-casein family. Mammary gland specific. Secreted in milk.

It localises to the secreted. In terms of biological role, kappa-casein stabilizes micelle formation, preventing casein precipitation in milk. This Tapirus indicus (Asiatic tapir) protein is Kappa-casein (CSN3).